We begin with the raw amino-acid sequence, 157 residues long: Ribosome-binding factor A (157 aa).

Residues 127–157 (QQQFGSEDASVEDEVLGDDVADDADETEGKD) are disordered. Positions 135 to 157 (ASVEDEVLGDDVADDADETEGKD) are enriched in acidic residues.

This sequence belongs to the RbfA family. In terms of assembly, monomer. Binds 30S ribosomal subunits, but not 50S ribosomal subunits or 70S ribosomes.

It is found in the cytoplasm. Functionally, one of several proteins that assist in the late maturation steps of the functional core of the 30S ribosomal subunit. Associates with free 30S ribosomal subunits (but not with 30S subunits that are part of 70S ribosomes or polysomes). Required for efficient processing of 16S rRNA. May interact with the 5'-terminal helix region of 16S rRNA. In Shewanella baltica (strain OS155 / ATCC BAA-1091), this protein is Ribosome-binding factor A.